A 286-amino-acid chain; its full sequence is uncharacterized protein (286 aa).

4 disordered regions span residues 1-38, 108-146, 196-227, and 241-286; these read MSQK…EDDV, HTGE…RRHK, RTQK…KTRL, and DVDD…PRSS. Residues 18-29 are compositionally biased toward low complexity; sequence SSSKQVLSSTSS. Residues 243-268 show a composition bias toward basic and acidic residues; sequence DDQKKDGSGEEKKEKKSAEKEKKISH. The span at 269 to 278 shows a compositional bias: polar residues; it reads ENVQSLSPSS.

This is an uncharacterized protein from Caenorhabditis elegans.